Reading from the N-terminus, the 344-residue chain is Anthranilate phosphoribosyltransferase (344 aa).

5-phospho-alpha-D-ribose 1-diphosphate-binding positions include glycine 85, 88 to 89 (GD), threonine 93, 95 to 98 (NIST), 113 to 121 (KHGGRSVSS), and serine 125. Residue glycine 85 participates in anthranilate binding. Serine 97 provides a ligand contact to Mg(2+). Arginine 171 contributes to the anthranilate binding site. 2 residues coordinate Mg(2+): aspartate 230 and glutamate 231.

It belongs to the anthranilate phosphoribosyltransferase family. In terms of assembly, homodimer. Mg(2+) is required as a cofactor.

It catalyses the reaction N-(5-phospho-beta-D-ribosyl)anthranilate + diphosphate = 5-phospho-alpha-D-ribose 1-diphosphate + anthranilate. The protein operates within amino-acid biosynthesis; L-tryptophan biosynthesis; L-tryptophan from chorismate: step 2/5. Functionally, catalyzes the transfer of the phosphoribosyl group of 5-phosphorylribose-1-pyrophosphate (PRPP) to anthranilate to yield N-(5'-phosphoribosyl)-anthranilate (PRA). This chain is Anthranilate phosphoribosyltransferase, found in Delftia acidovorans (strain DSM 14801 / SPH-1).